The sequence spans 68 residues: MSISARNQLKGKVVGLKKGVITAEVVLEIAGGNKITSIISLDSVEELGVKEGAELTAVIKSTDVMILA.

Residues 2–68 enclose the Mop domain; that stretch reads SISARNQLKG…IKSTDVMILA (67 aa).

In terms of biological role, binds one mole of molybdenum per mole of protein and contains a pterin. The protein is Molybdenum-pterin-binding protein 1 (mopI) of Clostridium pasteurianum.